Reading from the N-terminus, the 274-residue chain is Ribulose-phosphate 3-epimerase, chloroplastic (274 aa).

A chloroplast-targeting transit peptide spans 1–39 (MASPSSSSSLCSTFASPRAASLGRRLAFSSPRKAFRVRA). Serine 56 is a substrate binding site. Positions 81, 83, and 114 each coordinate a divalent metal cation. Aspartate 83 serves as the catalytic Proton acceptor. Substrate contacts are provided by residues histidine 114, 192-195 (GFGG), 225-227 (DGG), and 247-248 (GS). Residue aspartate 225 participates in a divalent metal cation binding. Catalysis depends on aspartate 225, which acts as the Proton donor.

The protein belongs to the ribulose-phosphate 3-epimerase family. Homooctamer. It depends on Co(2+) as a cofactor. Requires Fe(2+) as cofactor. Mn(2+) serves as cofactor. The cofactor is Zn(2+).

The protein localises to the plastid. It is found in the chloroplast thylakoid membrane. It carries out the reaction D-ribulose 5-phosphate = D-xylulose 5-phosphate. It functions in the pathway carbohydrate biosynthesis; Calvin cycle. Catalyzes the reversible epimerization of D-ribulose 5-phosphate to D-xylulose 5-phosphate. This is Ribulose-phosphate 3-epimerase, chloroplastic (RPE) from Oryza sativa subsp. japonica (Rice).